The chain runs to 400 residues: Endoplasmin (400 aa).

An N6-succinyllysine modification is found at K1. N42 carries N-linked (GlcNAc...) asparagine glycosylation. Residue S44 is modified to Phosphoserine. K76 is subject to N6-acetyllysine. N-linked (GlcNAc...) asparagine glycosylation is found at N78 and N99. K230 carries the post-translational modification N6-succinyllysine. A disordered region spans residues 346-400 (IDPEAQVEEEPEEEPEDTTEDTEQDEEEEVDAGTEEEEEEEQETAKESTAEKDEL). Residues 350–387 (AQVEEEPEEEPEDTTEDTEQDEEEEVDAGTEEEEEEEQ) show a composition bias toward acidic residues. T379 is subject to Phosphothreonine. Positions 388 to 400 (ETAKESTAEKDEL) are enriched in basic and acidic residues. Positions 397-400 (KDEL) match the Prevents secretion from ER motif.

This sequence belongs to the heat shock protein 90 family. Homodimer; disulfide-linked. Component of an EIF2 complex at least composed of CELF1/CUGBP1, CALR, CALR3, EIF2S1, EIF2S2, HSP90B1 and HSPA5. Part of a large chaperone multiprotein complex comprising DNAJB11, HSP90B1, HSPA5, HYOU, PDIA2, PDIA4, PDIA6, PPIB, SDF2L1, UGGT1 and very small amounts of ERP29, but not, or at very low levels, CALR nor CANX. Interacts with AIMP1; regulates its retention in the endoplasmic reticulum. Hyperglycosylated form interacts with OS9; promoting its degradation by the endoplasmic reticulum associated degradation (ERAD). Interacts with CNPY3. This interaction is disrupted in the presence of ATP. Interacts with TLR4 and TLR9, but not with TLR3. Interacts with MZB1 in a calcium-dependent manner. Interacts with METTL23. Interacts with IL1B; the interaction facilitates cargo translocation into the ERGIC. Interacts with EIF2AK3. In terms of processing, phosphorylated by CK2. Post-translationally, N-glycosylated cotranslationally at Asn-217 by STT3A-containing OST-A complex: this glycosylation is constitutive. In response to various stress, 5 additional facultative sites (Asn-62, Asn-107, Asn-445, Asn-481 and Asn-502) can be glycosylated post-translationally by STT3B-containing OST-B complex, leading to a hyperglycosylated form that is degraded by the ER-associated degradation (ERAD) pathway. In normal conditions, the OST-A complex together with CCDC134 prevent glycosylation at facultative sites during protein folding, thereby preventing hyperglycosylation. Mechanistically, nascent HSP90B1 is tethered during translation to a specialized CCDC134-containing translocon that forms a microenvironment for its folding, in which STT3A associates with the SRT pseudosubstrate motif, and prevents access to facultative glycosylation sites until folding is completed, rendering its facultative sites inaccessible to the OST-B complex.

It localises to the endoplasmic reticulum lumen. The protein resides in the sarcoplasmic reticulum lumen. It is found in the melanosome. It carries out the reaction ATP + H2O = ADP + phosphate + H(+). Its function is as follows. ATP-dependent chaperone involved in the processing of proteins in the endoplasmic reticulum, regulating their transport. Together with MESD, acts as a modulator of the Wnt pathway by promoting the folding of LRP6, a coreceptor of the canonical Wnt pathway. When associated with CNPY3, required for proper folding of Toll-like receptors. Promotes folding and trafficking of TLR4 to the cell surface. May participate in the unfolding of cytosolic leaderless cargos (lacking the secretion signal sequence) such as the interleukin 1/IL-1 to facilitate their translocation into the ERGIC (endoplasmic reticulum-Golgi intermediate compartment) and secretion; the translocation process is mediated by the cargo receptor TMED10. In Mesocricetus auratus (Golden hamster), this protein is Endoplasmin (HSP90B1).